Consider the following 366-residue polypeptide: tRNA-specific 2-thiouridylase MnmA (366 aa).

ATP contacts are provided by residues alanine 6 to serine 13 and leucine 32. Cysteine 101 serves as the catalytic Nucleophile. A disulfide bridge links cysteine 101 with cysteine 197. Glycine 125 is an ATP binding site. Residues lysine 147–glutamine 149 are interaction with tRNA. Residue cysteine 197 is the Cysteine persulfide intermediate of the active site.

Belongs to the MnmA/TRMU family.

It localises to the cytoplasm. The catalysed reaction is S-sulfanyl-L-cysteinyl-[protein] + uridine(34) in tRNA + AH2 + ATP = 2-thiouridine(34) in tRNA + L-cysteinyl-[protein] + A + AMP + diphosphate + H(+). Functionally, catalyzes the 2-thiolation of uridine at the wobble position (U34) of tRNA, leading to the formation of s(2)U34. This is tRNA-specific 2-thiouridylase MnmA from Cutibacterium acnes (strain DSM 16379 / KPA171202) (Propionibacterium acnes).